A 185-amino-acid polypeptide reads, in one-letter code: Ribosome-recycling factor (185 aa).

This sequence belongs to the RRF family.

It is found in the cytoplasm. In terms of biological role, responsible for the release of ribosomes from messenger RNA at the termination of protein biosynthesis. May increase the efficiency of translation by recycling ribosomes from one round of translation to another. The chain is Ribosome-recycling factor from Corynebacterium kroppenstedtii (strain DSM 44385 / JCM 11950 / CIP 105744 / CCUG 35717).